We begin with the raw amino-acid sequence, 347 residues long: Quinolinate synthase (347 aa).

Residues H47 and S68 each contribute to the iminosuccinate site. C113 is a [4Fe-4S] cluster binding site. Iminosuccinate is bound by residues Y139–N141 and S156. Residue C200 coordinates [4Fe-4S] cluster. Residues H226 to E228 and T243 contribute to the iminosuccinate site. C297 is a binding site for [4Fe-4S] cluster.

It belongs to the quinolinate synthase family. Type 1 subfamily. The cofactor is [4Fe-4S] cluster.

Its subcellular location is the cytoplasm. It catalyses the reaction iminosuccinate + dihydroxyacetone phosphate = quinolinate + phosphate + 2 H2O + H(+). The protein operates within cofactor biosynthesis; NAD(+) biosynthesis; quinolinate from iminoaspartate: step 1/1. Functionally, catalyzes the condensation of iminoaspartate with dihydroxyacetone phosphate to form quinolinate. The chain is Quinolinate synthase from Escherichia coli O157:H7.